The following is a 501-amino-acid chain: Glutamate--tRNA ligase (501 aa).

Positions 21–31 (PSPTGTPHVGL) match the 'HIGH' region motif. The 'KMSKS' region motif lies at 266–270 (KLSKR). Residue lysine 269 coordinates ATP.

This sequence belongs to the class-I aminoacyl-tRNA synthetase family. Glutamate--tRNA ligase type 1 subfamily. As to quaternary structure, monomer.

The protein localises to the cytoplasm. It carries out the reaction tRNA(Glu) + L-glutamate + ATP = L-glutamyl-tRNA(Glu) + AMP + diphosphate. Functionally, catalyzes the attachment of glutamate to tRNA(Glu) in a two-step reaction: glutamate is first activated by ATP to form Glu-AMP and then transferred to the acceptor end of tRNA(Glu). This is Glutamate--tRNA ligase from Kineococcus radiotolerans (strain ATCC BAA-149 / DSM 14245 / SRS30216).